Consider the following 206-residue polypeptide: Cytochrome b6-f complex iron-sulfur subunit, chloroplastic (206 aa).

A chloroplast-targeting transit peptide spans 1 to 29 (MAMLSSRRVAAPAKASAIRRSRVMPVVRA). Residues 39-68 (MNKRNIMNLILAGGAGLPITTLALGYGAFF) form a helical membrane-spanning segment. The 97-residue stretch at 92–188 (AGEWLKTHLA…CDVAESGLVT (97 aa)) folds into the Rieske domain. [2Fe-2S] cluster-binding residues include cysteine 134, histidine 136, cysteine 152, and histidine 155. Residues cysteine 139 and cysteine 154 are joined by a disulfide bond.

The protein belongs to the Rieske iron-sulfur protein family. The 4 large subunits of the cytochrome b6-f complex are cytochrome b6, subunit IV (17 kDa polypeptide, petD), cytochrome f and the Rieske protein, while the 4 small subunits are petG, petL, petM and petN. The complex functions as a dimer. It depends on [2Fe-2S] cluster as a cofactor.

The protein localises to the plastid. Its subcellular location is the chloroplast thylakoid membrane. It catalyses the reaction 2 oxidized [plastocyanin] + a plastoquinol + 2 H(+)(in) = 2 reduced [plastocyanin] + a plastoquinone + 4 H(+)(out). Its function is as follows. Component of the cytochrome b6-f complex, which mediates electron transfer between photosystem II (PSII) and photosystem I (PSI), cyclic electron flow around PSI, and state transitions. The chain is Cytochrome b6-f complex iron-sulfur subunit, chloroplastic (petC) from Chlamydomonas reinhardtii (Chlamydomonas smithii).